We begin with the raw amino-acid sequence, 360 residues long: Phospho-N-acetylmuramoyl-pentapeptide-transferase (360 aa).

Transmembrane regions (helical) follow at residues 25-45, 71-91, 94-114, 129-148, 168-188, 199-219, 239-259, 263-283, 288-308, and 337-357; these read TGGA…WIID, TPTM…VLWA, LNPY…VGFY, SGRT…CYAL, TAIY…VGAG, GLAI…SYLA, LAVL…FNAP, IFMG…IAVA, FVLA…IVQV, and QIVI…LSTL.

This sequence belongs to the glycosyltransferase 4 family. MraY subfamily. The cofactor is Mg(2+).

It localises to the cell inner membrane. It catalyses the reaction UDP-N-acetyl-alpha-D-muramoyl-L-alanyl-gamma-D-glutamyl-meso-2,6-diaminopimeloyl-D-alanyl-D-alanine + di-trans,octa-cis-undecaprenyl phosphate = di-trans,octa-cis-undecaprenyl diphospho-N-acetyl-alpha-D-muramoyl-L-alanyl-D-glutamyl-meso-2,6-diaminopimeloyl-D-alanyl-D-alanine + UMP. Its pathway is cell wall biogenesis; peptidoglycan biosynthesis. Functionally, catalyzes the initial step of the lipid cycle reactions in the biosynthesis of the cell wall peptidoglycan: transfers peptidoglycan precursor phospho-MurNAc-pentapeptide from UDP-MurNAc-pentapeptide onto the lipid carrier undecaprenyl phosphate, yielding undecaprenyl-pyrophosphoryl-MurNAc-pentapeptide, known as lipid I. The protein is Phospho-N-acetylmuramoyl-pentapeptide-transferase of Rhodopseudomonas palustris (strain BisA53).